The primary structure comprises 539 residues: Lysophospholipid acyltransferase LPEAT2 (539 aa).

The chain crosses the membrane as a helical span at residues 93-113 (LVICLPIALIRLVLFAASLAV). Residues 178-183 (HVSYIE) carry the HXXXXD motif motif. EF-hand domains are found at residues 426-455 (KRIF…VLTQ), 457-492 (LFKQ…TIPN), and 493-528 (LNKD…NPLL). Ca(2+) is bound by residues Asp-470, Asp-472, Asp-474, Tyr-476, Glu-481, Asp-506, Asp-508, Asp-510, Arg-512, and Asp-517.

Belongs to the 1-acyl-sn-glycerol-3-phosphate acyltransferase family.

The protein localises to the golgi apparatus membrane. It is found in the late endosome membrane. The catalysed reaction is a 1-acyl-sn-glycero-3-phosphoethanolamine + an acyl-CoA = a 1,2-diacyl-sn-glycero-3-phosphoethanolamine + CoA. It catalyses the reaction a 1-acyl-sn-glycero-3-phosphocholine + an acyl-CoA = a 1,2-diacyl-sn-glycero-3-phosphocholine + CoA. The enzyme catalyses a 1-acyl-sn-glycero-3-phospho-L-serine + an acyl-CoA = a 1,2-diacyl-sn-glycero-3-phospho-L-serine + CoA. It functions in the pathway lipid metabolism; phospholipid metabolism. In terms of biological role, possesses acyl-CoA-dependent lysophospholipid acyltransferase activity with a subset of lysophospholipids as substrates. Exhibits strong acylation activity on lysophosphatidylethanolamine (LPE), and lower activity on lysophosphatidylcholine (LPC) and lysophosphatidylserine (LPS). Exhibits acylation activity on both LPE and LPC. Has a preference for 18:1-LPE over 16:0-LPE as acceptor. Palmitoyl-CoA (16:0-CoA) is a better acyl donor than oleoyl-CoA (18:1-CoA). Among several different acyl-CoA species the best acyl donor is eicosanoyl-CoA (20:0-CoA). Activity is calcium-independent. Its activity is essential for maintaining adequate levels of phosphatidylethanolamine (PE), LPE and LPC in the cells, which is crucial for plant growth regulation. The sequence is that of Lysophospholipid acyltransferase LPEAT2 from Arabidopsis thaliana (Mouse-ear cress).